Here is a 513-residue protein sequence, read N- to C-terminus: Serine/threonine-protein phosphatase T (513 aa).

TPR repeat units lie at residues 12–45 (ALER…DSTQ), 46–79 (SIYF…DPKN), and 80–113 (IKAY…KPND). Positions 188 to 513 (KNMSQEFISK…MAYSNGGFGL (326 aa)) are catalytic. Residues aspartate 249, histidine 251, aspartate 278, and asparagine 310 each contribute to the Mn(2+) site. Catalysis depends on histidine 311, which acts as the Proton donor/acceptor. The Mn(2+) site is built by histidine 359 and histidine 434.

The protein belongs to the PPP phosphatase family. PP-5 (PP-T) subfamily. As to quaternary structure, interacts (via TPR repeats) with HSP82 (via C-terminal MEEVD pentapeptide). The cofactor is Mg(2+). It depends on Mn(2+) as a cofactor.

It is found in the nucleus. The catalysed reaction is O-phospho-L-seryl-[protein] + H2O = L-seryl-[protein] + phosphate. It carries out the reaction O-phospho-L-threonyl-[protein] + H2O = L-threonyl-[protein] + phosphate. With respect to regulation, stimulated by arachidonic acid and other unsaturated fatty acids, and by arachidoyl coenzyme A. In terms of biological role, protein phosphatase that specifically binds to and dephosphorylates the molecular chaperone Hsp90 (HSC82 and HSP82). Dephosphorylation positively regulates the Hsp90 chaperone machinery. The protein is Serine/threonine-protein phosphatase T (PPT1) of Saccharomyces cerevisiae (strain ATCC 204508 / S288c) (Baker's yeast).